The sequence spans 286 residues: 4-hydroxybenzoate octaprenyltransferase (286 aa).

Transmembrane regions (helical) follow at residues Ile20–Leu40, Ile43–Ile63, Leu96–Val116, Phe142–Val162, Trp167–Val187, Gln210–Ala230, Ile235–Phe255, and Phe266–Ile286.

This sequence belongs to the UbiA prenyltransferase family. The cofactor is Mg(2+).

It localises to the cell inner membrane. It catalyses the reaction all-trans-octaprenyl diphosphate + 4-hydroxybenzoate = 4-hydroxy-3-(all-trans-octaprenyl)benzoate + diphosphate. The protein operates within cofactor biosynthesis; ubiquinone biosynthesis. Its function is as follows. Catalyzes the prenylation of para-hydroxybenzoate (PHB) with an all-trans polyprenyl group. Mediates the second step in the final reaction sequence of ubiquinone-8 (UQ-8) biosynthesis, which is the condensation of the polyisoprenoid side chain with PHB, generating the first membrane-bound Q intermediate 3-octaprenyl-4-hydroxybenzoate. The sequence is that of 4-hydroxybenzoate octaprenyltransferase from Shewanella frigidimarina (strain NCIMB 400).